Consider the following 142-residue polypeptide: Putative pre-16S rRNA nuclease (142 aa).

The protein belongs to the YqgF nuclease family.

The protein localises to the cytoplasm. In terms of biological role, could be a nuclease involved in processing of the 5'-end of pre-16S rRNA. This is Putative pre-16S rRNA nuclease from Lactobacillus delbrueckii subsp. bulgaricus (strain ATCC BAA-365 / Lb-18).